Consider the following 490-residue polypeptide: Transmembrane protease serine 2 (490 aa).

Over 1–83 (MALNSGSPPG…ALCTSKSKKS (83 aa)) the chain is Cytoplasmic. A helical; Signal-anchor for type II membrane protein membrane pass occupies residues 84 to 104 (LCLALALGTVLTGAAVAAVLL). Residues 105–490 (WRFWDSNCST…WIYQQMRANS (386 aa)) are Extracellular-facing. N-linked (GlcNAc...) asparagine glycosylation is present at asparagine 111. The LDL-receptor class A domain occupies 111–149 (NCSTSEMECGSSGTCISSSLWCDGVAHCPNGEDENRCVR). 9 disulfides stabilise this stretch: cysteine 112-cysteine 125, cysteine 119-cysteine 138, cysteine 132-cysteine 147, cysteine 171-cysteine 230, cysteine 184-cysteine 240, cysteine 243-cysteine 363, cysteine 279-cysteine 295, cysteine 408-cysteine 424, and cysteine 435-cysteine 463. 4 residues coordinate Ca(2+): aspartate 133, valine 135, aspartate 143, and glutamate 144. The 93-residue stretch at 150–242 (LYGQSFILQV…RMVVSLRCIE (93 aa)) folds into the SRCR domain. N-linked (GlcNAc...) asparagine glycosylation occurs at asparagine 212. Residues 254 to 487 (IVGGLNASPG…FTDWIYQQMR (234 aa)) form the Peptidase S1 domain. Residues histidine 294 and aspartate 343 each act as charge relay system in the active site. The active-site Charge relay system is the serine 439. N-linked (GlcNAc...) asparagine glycosylation is present at asparagine 474.

This sequence belongs to the peptidase S1 family. In terms of assembly, the catalytically active form interacts with ACE2. Post-translationally, proteolytically processed; by an autocatalytic mechanism. Autocleavage induces active conformation. Larynx, trachea and bronchi, lung, prostate and kidney.

Its subcellular location is the cell membrane. The protein localises to the secreted. It carries out the reaction The enzyme cleaves angiotensin-converting enzyme 2 (EC 3.4.17.23) and cleaves influenzea A and B virus and coronavirus spike glycoproteins at arginine residues.. Its function is as follows. Plasma membrane-anchored serine protease that cleaves at arginine residues. Participates in proteolytic cascades of relevance for the normal physiologic function of the prostate. Androgen-induced TMPRSS2 activates several substrates that include pro-hepatocyte growth factor/HGF, the protease activated receptor-2/F2RL1 or matriptase/ST14 leading to extracellular matrix disruption. In addition, activates trigeminal neurons and contribute to both spontaneous pain and mechanical allodynia. In terms of biological role, (Microbial infection) Essential for spread and pathogenesis of influenza A virus (strains H1N1, H3N2 and H7N9) and is involved in proteolytic cleavage and activation of hemagglutinin (HA) protein which is essential for viral infectivity. This is Transmembrane protease serine 2 (Tmprss2) from Mus musculus (Mouse).